The sequence spans 352 residues: DNA polymerase IV (352 aa).

A UmuC domain is found at 4–185 (IIHVDMDCFY…LPLEKIPGVG (182 aa)). The Mg(2+) site is built by D8 and D103. E104 is an active-site residue.

The protein belongs to the DNA polymerase type-Y family. In terms of assembly, monomer. The cofactor is Mg(2+).

The protein resides in the cytoplasm. The enzyme catalyses DNA(n) + a 2'-deoxyribonucleoside 5'-triphosphate = DNA(n+1) + diphosphate. Functionally, poorly processive, error-prone DNA polymerase involved in untargeted mutagenesis. Copies undamaged DNA at stalled replication forks, which arise in vivo from mismatched or misaligned primer ends. These misaligned primers can be extended by PolIV. Exhibits no 3'-5' exonuclease (proofreading) activity. May be involved in translesional synthesis, in conjunction with the beta clamp from PolIII. The polypeptide is DNA polymerase IV (Pectobacterium atrosepticum (strain SCRI 1043 / ATCC BAA-672) (Erwinia carotovora subsp. atroseptica)).